Consider the following 320-residue polypeptide: Ribosome biogenesis protein BRX1 homolog 2 (320 aa).

Positions 1–40 (MGRKRKHSETEAPAPVKKSDEPAPDRPKRTLLGWKDKSEG) are disordered. The span at 17-40 (KKSDEPAPDRPKRTLLGWKDKSEG) shows a compositional bias: basic and acidic residues. One can recognise a Brix domain in the interval 57 to 260 (EKVLVTCSRR…PIKIFAGSFG (204 aa)). The interval 297-320 (RKKMHELSNPLEPDEFADMWKDDE) is disordered. The span at 308 to 320 (EPDEFADMWKDDE) shows a compositional bias: acidic residues.

This sequence belongs to the BRX1 family. In terms of tissue distribution, expressed in roots, rosette leaves, stems, flowers, siliques and seeds.

The protein localises to the nucleus. It is found in the nucleolus. Functionally, involved in pre-rRNA processing and required for biogenesis of the large (60S) ribosomal subunit. Required for proper development. This is Ribosome biogenesis protein BRX1 homolog 2 from Arabidopsis thaliana (Mouse-ear cress).